Here is a 341-residue protein sequence, read N- to C-terminus: tRNA N6-adenosine threonylcarbamoyltransferase (341 aa).

Fe cation is bound by residues histidine 115 and histidine 119. Substrate-binding positions include 138–142, aspartate 171, glycine 184, aspartate 188, and asparagine 279; that span reads VVSGG. Residue aspartate 307 coordinates Fe cation.

The protein belongs to the KAE1 / TsaD family. Fe(2+) is required as a cofactor.

It localises to the cytoplasm. The enzyme catalyses L-threonylcarbamoyladenylate + adenosine(37) in tRNA = N(6)-L-threonylcarbamoyladenosine(37) in tRNA + AMP + H(+). Its function is as follows. Required for the formation of a threonylcarbamoyl group on adenosine at position 37 (t(6)A37) in tRNAs that read codons beginning with adenine. Is involved in the transfer of the threonylcarbamoyl moiety of threonylcarbamoyl-AMP (TC-AMP) to the N6 group of A37, together with TsaE and TsaB. TsaD likely plays a direct catalytic role in this reaction. The protein is tRNA N6-adenosine threonylcarbamoyltransferase of Clostridium kluyveri (strain NBRC 12016).